The primary structure comprises 255 residues: Bouquet formation protein 3 (255 aa).

The next 8 helical transmembrane spans lie at 13 to 33, 48 to 68, 72 to 94, 99 to 116, 132 to 152, 172 to 192, 205 to 225, and 235 to 255; these read IKVS…NYHL, IPYW…LLLQ, LGYG…YYLT, IAWA…ARCF, YSVS…LNYI, SLVA…GYVI, SLFL…SILF, and VVGA…ALSL.

The protein resides in the endoplasmic reticulum membrane. It is found in the nucleus inner membrane. In terms of biological role, connects telomeres to the nuclear envelop (NE) during both vegetative growth and meiosis. This connection ensures clustering of telomeres to the spindle pole body (SPB) when cells enter meiotic prophase. The sequence is that of Bouquet formation protein 3 (bqt3) from Schizosaccharomyces pombe (strain 972 / ATCC 24843) (Fission yeast).